Reading from the N-terminus, the 397-residue chain is Cysteine protease ATG4A (397 aa).

Catalysis depends on Cys79, which acts as the Nucleophile. Catalysis depends on residues Asp279 and His281. The LIR signature appears at 392–395 (FEIL).

The protein belongs to the peptidase C54 family.

The protein localises to the cytoplasm. It catalyses the reaction [protein]-C-terminal L-amino acid-glycyl-phosphatidylethanolamide + H2O = [protein]-C-terminal L-amino acid-glycine + a 1,2-diacyl-sn-glycero-3-phosphoethanolamine. Functionally, cysteine protease that plays a key role in autophagy by mediating both proteolytic activation and delipidation of ATG8 family proteins. The protease activity is required for proteolytic activation of ATG8 family proteins: cleaves the C-terminal amino acid of ATG8 proteins to reveal a C-terminal glycine. Exposure of the glycine at the C-terminus is essential for ATG8 proteins conjugation to phosphatidylethanolamine (PE) and insertion to membranes, which is necessary for autophagy. Protease activity is also required to counteract formation of high-molecular weight conjugates of ATG8 proteins (ATG8ylation): acts as a deubiquitinating-like enzyme that removes ATG8 conjugated to other proteins, such as ATG3. In addition to the protease activity, also mediates delipidation of ATG8 family proteins. Catalyzes delipidation of PE-conjugated forms of ATG8 proteins during macroautophagy. This Xenopus laevis (African clawed frog) protein is Cysteine protease ATG4A.